We begin with the raw amino-acid sequence, 120 residues long: Ribonuclease P protein component (120 aa).

This sequence belongs to the RnpA family. Consists of a catalytic RNA component (M1 or rnpB) and a protein subunit.

It carries out the reaction Endonucleolytic cleavage of RNA, removing 5'-extranucleotides from tRNA precursor.. In terms of biological role, RNaseP catalyzes the removal of the 5'-leader sequence from pre-tRNA to produce the mature 5'-terminus. It can also cleave other RNA substrates such as 4.5S RNA. The protein component plays an auxiliary but essential role in vivo by binding to the 5'-leader sequence and broadening the substrate specificity of the ribozyme. In Chlamydia trachomatis serovar D (strain ATCC VR-885 / DSM 19411 / UW-3/Cx), this protein is Ribonuclease P protein component.